The primary structure comprises 212 residues: uncharacterized protein (212 aa).

Transmembrane regions (helical) follow at residues 20-40 (FLIGFFTEYGYWAVLFVLIIC), 70-90 (LMLLVSMIGVLAGDSCMYWLG), 155-175 (FVLIDFCAAIISVPIWIYLGE), and 192-212 (QIVIYIFIGYLYYSFLEMEKI).

The protein belongs to the DedA family.

The protein resides in the cell membrane. This is an uncharacterized protein from Haemophilus influenzae (strain ATCC 51907 / DSM 11121 / KW20 / Rd).